The following is a 152-amino-acid chain: Deoxyuridine 5'-triphosphate nucleotidohydrolase (152 aa).

Substrate is bound by residues 71–73, N84, 88–90, and M98; these read RSG and LID.

The protein belongs to the dUTPase family. Requires Mg(2+) as cofactor.

The catalysed reaction is dUTP + H2O = dUMP + diphosphate + H(+). The protein operates within pyrimidine metabolism; dUMP biosynthesis; dUMP from dCTP (dUTP route): step 2/2. In terms of biological role, this enzyme is involved in nucleotide metabolism: it produces dUMP, the immediate precursor of thymidine nucleotides and it decreases the intracellular concentration of dUTP so that uracil cannot be incorporated into DNA. The chain is Deoxyuridine 5'-triphosphate nucleotidohydrolase from Salmonella agona (strain SL483).